A 318-amino-acid chain; its full sequence is MANTLEQLKLYTTIVADTGDIEAIKRYQPEDATTNPSLILKAAQIPEYESLIDNAIDWAKSQSDDLAQQLDDASDKLAVNIGVEILKLVPGRISTEVDARLSFDKEQSIAKAHKLVRLYKEAGVDKSRILIKLASTWEGICAAKELEKEGINCNLTLLFSFAQARACAEAGAYLISPFVGRILDWYKKDTGKDYDAVNDPGVVSVTEIYNYYKQHGFNTVVMGASFRNIGEIIELAGCDRLTIGPSLLEELANSQIDITPKLVAATSTVAAEAPLTEAQFRWDFNQDPMAVDKLAEGIRNFAIDQGKLEVMLTAKLAN.

The Schiff-base intermediate with substrate role is filled by K132.

It belongs to the transaldolase family. Type 1 subfamily. As to quaternary structure, homodimer.

The protein resides in the cytoplasm. It catalyses the reaction D-sedoheptulose 7-phosphate + D-glyceraldehyde 3-phosphate = D-erythrose 4-phosphate + beta-D-fructose 6-phosphate. It participates in carbohydrate degradation; pentose phosphate pathway; D-glyceraldehyde 3-phosphate and beta-D-fructose 6-phosphate from D-ribose 5-phosphate and D-xylulose 5-phosphate (non-oxidative stage): step 2/3. Its function is as follows. Transaldolase is important for the balance of metabolites in the pentose-phosphate pathway. This chain is Transaldolase, found in Shewanella baltica (strain OS223).